We begin with the raw amino-acid sequence, 237 residues long: Ribosomal RNA small subunit methyltransferase G (237 aa).

Residues Gly-78, Phe-83, 129-130 (AE), and Arg-148 contribute to the S-adenosyl-L-methionine site. The segment at 218–237 (KKETPNKFPRKAGMPNKRPL) is disordered.

Belongs to the methyltransferase superfamily. RNA methyltransferase RsmG family.

It localises to the cytoplasm. Functionally, specifically methylates the N7 position of a guanine in 16S rRNA. The polypeptide is Ribosomal RNA small subunit methyltransferase G (Streptococcus suis (strain 98HAH33)).